Reading from the N-terminus, the 223-residue chain is Ribosomal RNA small subunit methyltransferase G (223 aa).

S-adenosyl-L-methionine contacts are provided by residues Gly-84, Leu-89, 135-136, and Arg-150; that span reads VE.

Belongs to the methyltransferase superfamily. RNA methyltransferase RsmG family.

The protein resides in the cytoplasm. It carries out the reaction guanosine(527) in 16S rRNA + S-adenosyl-L-methionine = N(7)-methylguanosine(527) in 16S rRNA + S-adenosyl-L-homocysteine. Specifically methylates the N7 position of guanine in position 527 of 16S rRNA. The sequence is that of Ribosomal RNA small subunit methyltransferase G from Saccharophagus degradans (strain 2-40 / ATCC 43961 / DSM 17024).